The primary structure comprises 524 residues: Probable inorganic phosphate transporter 1-2 (524 aa).

The Cytoplasmic portion of the chain corresponds to 1-24 (MAEQQLGVLKALDVAKTQLYHFTA). A helical transmembrane segment spans residues 25-45 (IVIAGMGFFTDAYDLFCVSLV). The Extracellular segment spans residues 46-70 (TKLLGRIYYFNPESAKPGSLPPHVA). A helical membrane pass occupies residues 71–91 (AAVNGVALCGTLSGQLFFGWL). At 92–99 (GDKLGRKK) the chain is on the cytoplasmic side. A helical transmembrane segment spans residues 100-120 (VYGLTLIMMILCSVASGLSFG). Over 121 to 131 (NEAKGVMTTLC) the chain is Extracellular. A helical membrane pass occupies residues 132–152 (FFRFWLGFGIGGDYPLSATIM). The Cytoplasmic segment spans residues 153 to 161 (SEYANKKTR). The chain crosses the membrane as a helical span at residues 162-182 (GAFIAAVFAMQGVGILAGGFV). At 183 to 211 (ALAVSSIFDKKFPAPTYAVNRALSTPPQV) the chain is on the extracellular side. Residues 212-232 (DYIWRIIVMFGALPAALTYYW) traverse the membrane as a helical segment. Topologically, residues 233–292 (RMKMPETARYTALVAKNIKQATADMSKVLQTDIELEERVEDDVKDPRQNYGLFSKEFLRR) are cytoplasmic. Residues 293–313 (HGLHLLGTTSTWFLLDIAFYS) form a helical membrane-spanning segment. Over 314–348 (QNLFQKDIFSAIGWIPKAATMNATHEVFRIARAQT) the chain is Extracellular. The chain crosses the membrane as a helical span at residues 349–369 (LIALCSTVPGYWFTVAFIDTI). The Cytoplasmic segment spans residues 370–371 (GR). A helical transmembrane segment spans residues 372–392 (FKIQLNGFFMMTVFMFAIAFP). The Extracellular segment spans residues 393–402 (YNHWIKPENR). A helical transmembrane segment spans residues 403-423 (IGFVVMYSLTFFFANFGPNAT). Topologically, residues 424 to 441 (TFIVPAEIFPARLRSTCH) are cytoplasmic. The helical transmembrane segment at 442 to 462 (GISAAAGKAGAIIGAFGFLYA) threads the bilayer. Residues 463-484 (AQNQDKAKVDAGYPPGIGVKNS) are Extracellular-facing. The helical transmembrane segment at 485-505 (LIVLGVLNFIGMLFTFLVPEP) threads the bilayer. Over 506 to 524 (KGKSLEELSGEAEVSHDEK) the chain is Cytoplasmic.

This sequence belongs to the major facilitator superfamily. Phosphate:H(+) symporter (TC 2.A.1.9) family. As to expression, root specific, especially in trichoblasts. In mature plants, localized in root cortical cells and young lateral roots.

The protein resides in the membrane. Functionally, high-affinity transporter for external inorganic phosphate. This chain is Probable inorganic phosphate transporter 1-2 (PHT1-2), found in Arabidopsis thaliana (Mouse-ear cress).